Consider the following 218-residue polypeptide: Thiamine-phosphate synthase (218 aa).

Residues 36-40 (QVRSK) and Asp70 each bind 4-amino-2-methyl-5-(diphosphooxymethyl)pyrimidine. Asp71 and Asp94 together coordinate Mg(2+). A 4-amino-2-methyl-5-(diphosphooxymethyl)pyrimidine-binding site is contributed by Thr113. 141–143 (TPT) contacts 2-[(2R,5Z)-2-carboxy-4-methylthiazol-5(2H)-ylidene]ethyl phosphate. Lys144 serves as a coordination point for 4-amino-2-methyl-5-(diphosphooxymethyl)pyrimidine.

Belongs to the thiamine-phosphate synthase family. It depends on Mg(2+) as a cofactor.

The enzyme catalyses 2-[(2R,5Z)-2-carboxy-4-methylthiazol-5(2H)-ylidene]ethyl phosphate + 4-amino-2-methyl-5-(diphosphooxymethyl)pyrimidine + 2 H(+) = thiamine phosphate + CO2 + diphosphate. It carries out the reaction 2-(2-carboxy-4-methylthiazol-5-yl)ethyl phosphate + 4-amino-2-methyl-5-(diphosphooxymethyl)pyrimidine + 2 H(+) = thiamine phosphate + CO2 + diphosphate. The catalysed reaction is 4-methyl-5-(2-phosphooxyethyl)-thiazole + 4-amino-2-methyl-5-(diphosphooxymethyl)pyrimidine + H(+) = thiamine phosphate + diphosphate. It functions in the pathway cofactor biosynthesis; thiamine diphosphate biosynthesis; thiamine phosphate from 4-amino-2-methyl-5-diphosphomethylpyrimidine and 4-methyl-5-(2-phosphoethyl)-thiazole: step 1/1. In terms of biological role, condenses 4-methyl-5-(beta-hydroxyethyl)thiazole monophosphate (THZ-P) and 2-methyl-4-amino-5-hydroxymethyl pyrimidine pyrophosphate (HMP-PP) to form thiamine monophosphate (TMP). The sequence is that of Thiamine-phosphate synthase from Corynebacterium jeikeium (strain K411).